We begin with the raw amino-acid sequence, 243 residues long: Ubiquinone/menaquinone biosynthesis C-methyltransferase UbiE (243 aa).

S-adenosyl-L-methionine contacts are provided by residues Thr-69, Asp-90, and 116-117 (DA).

This sequence belongs to the class I-like SAM-binding methyltransferase superfamily. MenG/UbiE family.

The enzyme catalyses a 2-demethylmenaquinol + S-adenosyl-L-methionine = a menaquinol + S-adenosyl-L-homocysteine + H(+). It carries out the reaction a 2-methoxy-6-(all-trans-polyprenyl)benzene-1,4-diol + S-adenosyl-L-methionine = a 5-methoxy-2-methyl-3-(all-trans-polyprenyl)benzene-1,4-diol + S-adenosyl-L-homocysteine + H(+). It participates in quinol/quinone metabolism; menaquinone biosynthesis; menaquinol from 1,4-dihydroxy-2-naphthoate: step 2/2. Its pathway is cofactor biosynthesis; ubiquinone biosynthesis. Its function is as follows. Methyltransferase required for the conversion of demethylmenaquinol (DMKH2) to menaquinol (MKH2) and the conversion of 2-polyprenyl-6-methoxy-1,4-benzoquinol (DDMQH2) to 2-polyprenyl-3-methyl-6-methoxy-1,4-benzoquinol (DMQH2). This chain is Ubiquinone/menaquinone biosynthesis C-methyltransferase UbiE, found in Burkholderia mallei (strain NCTC 10247).